We begin with the raw amino-acid sequence, 132 residues long: DNA-directed RNA polymerase subunit omega (132 aa).

Belongs to the RNA polymerase subunit omega family. The RNAP catalytic core consists of 2 alpha, 1 beta, 1 beta' and 1 omega subunit. When a sigma factor is associated with the core the holoenzyme is formed, which can initiate transcription.

It catalyses the reaction RNA(n) + a ribonucleoside 5'-triphosphate = RNA(n+1) + diphosphate. In terms of biological role, promotes RNA polymerase assembly. Latches the N- and C-terminal regions of the beta' subunit thereby facilitating its interaction with the beta and alpha subunits. In Bartonella bacilliformis (strain ATCC 35685 / KC583 / Herrer 020/F12,63), this protein is DNA-directed RNA polymerase subunit omega.